Reading from the N-terminus, the 346-residue chain is Protein RecA (346 aa).

65–72 is a binding site for ATP; sequence GPESSGKT.

The protein belongs to the RecA family.

It localises to the cytoplasm. Functionally, can catalyze the hydrolysis of ATP in the presence of single-stranded DNA, the ATP-dependent uptake of single-stranded DNA by duplex DNA, and the ATP-dependent hybridization of homologous single-stranded DNAs. It interacts with LexA causing its activation and leading to its autocatalytic cleavage. The chain is Protein RecA from Pseudomonas aeruginosa (strain UCBPP-PA14).